The primary structure comprises 349 residues: ALA-interacting subunit 3 (349 aa).

The segment covering 1–21 (MSSNTASSSAGAAGSGDSSAA) has biased composition (low complexity). Residues 1 to 30 (MSSNTASSSAGAAGSGDSSAARKNSKRPKY) form a disordered region. Residue S2 is modified to N-acetylserine. The helical transmembrane segment at 50 to 70 (VISTFLIVSVIFIPLGVISLF) threads the bilayer. 3 N-linked (GlcNAc...) asparagine glycosylation sites follow: N181, N190, and N223. A helical membrane pass occupies residues 305–325 (LGIAYLTVGGICFILALAFTI).

The protein belongs to the CDC50/LEM3 family. Interacts with ALA2 and ALA3 in a heterologous system. In terms of tissue distribution, expressed in roots, leaves, stems, flowers and siliques.

It localises to the golgi apparatus membrane. The protein localises to the prevacuolar compartment membrane. Its subcellular location is the endoplasmic reticulum membrane. Required for the lipid transport activity of the ALA/ALIS P4-ATPase complex. This Arabidopsis thaliana (Mouse-ear cress) protein is ALA-interacting subunit 3 (ALIS3).